The primary structure comprises 387 residues: Phosphoglycerate kinase (387 aa).

Substrate is bound by residues 21-23 (DLN), Arg36, and 59-62 (HLGR). N6-acetyllysine is present on Lys84. Substrate contacts are provided by Arg113 and Arg146. Residues Lys197, Glu314, and 340–343 (GGDT) each bind ATP.

This sequence belongs to the phosphoglycerate kinase family. As to quaternary structure, monomer.

It localises to the cytoplasm. The catalysed reaction is (2R)-3-phosphoglycerate + ATP = (2R)-3-phospho-glyceroyl phosphate + ADP. Its pathway is carbohydrate degradation; glycolysis; pyruvate from D-glyceraldehyde 3-phosphate: step 2/5. The sequence is that of Phosphoglycerate kinase from Shigella sonnei (strain Ss046).